Reading from the N-terminus, the 137-residue chain is Large ribosomal subunit protein uL16 (137 aa).

This sequence belongs to the universal ribosomal protein uL16 family. Part of the 50S ribosomal subunit.

In terms of biological role, binds 23S rRNA and is also seen to make contacts with the A and possibly P site tRNAs. This is Large ribosomal subunit protein uL16 from Methylococcus capsulatus (strain ATCC 33009 / NCIMB 11132 / Bath).